The chain runs to 160 residues: MTKKKAHKPGSATIAMNRRARHEYFIEEEFEAGLSLQGWEVKSLRAGKANISDSYVLLKDGDAYLFGATITPLNVASSHVVCDPMRSRKLLLNQRELDSLYGRVNREGYTVVALSLYWKNAWCKVRIGVAKGKKAHDKRSDIKEREWKLDKARIMKNAGR.

It belongs to the SmpB family.

The protein resides in the cytoplasm. Functionally, required for rescue of stalled ribosomes mediated by trans-translation. Binds to transfer-messenger RNA (tmRNA), required for stable association of tmRNA with ribosomes. tmRNA and SmpB together mimic tRNA shape, replacing the anticodon stem-loop with SmpB. tmRNA is encoded by the ssrA gene; the 2 termini fold to resemble tRNA(Ala) and it encodes a 'tag peptide', a short internal open reading frame. During trans-translation Ala-aminoacylated tmRNA acts like a tRNA, entering the A-site of stalled ribosomes, displacing the stalled mRNA. The ribosome then switches to translate the ORF on the tmRNA; the nascent peptide is terminated with the 'tag peptide' encoded by the tmRNA and targeted for degradation. The ribosome is freed to recommence translation, which seems to be the essential function of trans-translation. The protein is SsrA-binding protein of Photorhabdus laumondii subsp. laumondii (strain DSM 15139 / CIP 105565 / TT01) (Photorhabdus luminescens subsp. laumondii).